Here is a 285-residue protein sequence, read N- to C-terminus: Eukaryotic translation initiation factor 3 subunit F-2 (285 aa).

Positions 11–145 constitute an MPN domain; sequence VFIKPLVLFQ…TRLYCAVEIG (135 aa).

It belongs to the eIF-3 subunit F family. As to quaternary structure, component of the eukaryotic translation initiation factor 3 (eIF-3) complex. The eIF-3 complex interacts with pix.

It is found in the cytoplasm. In terms of biological role, component of the eukaryotic translation initiation factor 3 (eIF-3) complex, which is involved in protein synthesis of a specialized repertoire of mRNAs and, together with other initiation factors, stimulates binding of mRNA and methionyl-tRNAi to the 40S ribosome. The eIF-3 complex specifically targets and initiates translation of a subset of mRNAs involved in cell proliferation. The chain is Eukaryotic translation initiation factor 3 subunit F-2 from Drosophila yakuba (Fruit fly).